Here is a 217-residue protein sequence, read N- to C-terminus: Serine acetyltransferase (217 aa).

It belongs to the transferase hexapeptide repeat family.

Its subcellular location is the cytoplasm. It catalyses the reaction L-serine + acetyl-CoA = O-acetyl-L-serine + CoA. It functions in the pathway amino-acid biosynthesis; L-cysteine biosynthesis; L-cysteine from L-serine: step 1/2. Inhibited by cysteine. Its function is as follows. Catalyzes the acetylation of serine by acetyl-CoA to produce O-acetylserine (OAS). The sequence is that of Serine acetyltransferase (cysE) from Bacillus subtilis (strain 168).